A 697-amino-acid polypeptide reads, in one-letter code: Protein Niban 3 (697 aa).

The segment at 1–48 is disordered; that stretch reads MGPDRKEVPLSRGTQAVVVGKGRGAPGDDSSMGGRPSSPLDKQQRQHL.

This sequence belongs to the Niban family. As to expression, specifically expressed in B-lymphocytes.

This Homo sapiens (Human) protein is Protein Niban 3.